The sequence spans 225 residues: PKHD-type hydroxylase YbiX (225 aa).

The 100-residue stretch at 78-177 (TLSTPLFNRY…RVASFMWIQS (100 aa)) folds into the Fe2OG dioxygenase domain. The Fe cation site is built by His96, Asp98, and His158. Position 168 (Arg168) interacts with 2-oxoglutarate.

Fe(2+) is required as a cofactor. It depends on L-ascorbate as a cofactor.

The chain is PKHD-type hydroxylase YbiX from Escherichia coli O8 (strain IAI1).